The following is an 87-amino-acid chain: MFVVLVYDTAAERNPNALRTCRKYLHWVQRSVFEGELSAAQYRALMTTLRDQLDLTYDSIRVYRTRSPALVETEWLGVPLGNQDSVL.

Position 8 (Asp-8) interacts with Mg(2+).

It belongs to the CRISPR-associated endoribonuclease Cas2 protein family. In terms of assembly, homodimer, forms a heterotetramer with a Cas1 homodimer. Mg(2+) is required as a cofactor.

In terms of biological role, CRISPR (clustered regularly interspaced short palindromic repeat), is an adaptive immune system that provides protection against mobile genetic elements (viruses, transposable elements and conjugative plasmids). CRISPR clusters contain sequences complementary to antecedent mobile elements and target invading nucleic acids. CRISPR clusters are transcribed and processed into CRISPR RNA (crRNA). Functions as a ssRNA-specific endoribonuclease. Involved in the integration of spacer DNA into the CRISPR cassette. The chain is CRISPR-associated endoribonuclease Cas2 from Frankia alni (strain DSM 45986 / CECT 9034 / ACN14a).